The primary structure comprises 446 residues: Probable glucuronosyltransferase Os04g0650300 (446 aa).

Over Met1–Ser30 the chain is Cytoplasmic. A helical; Signal-anchor for type II membrane protein transmembrane segment spans residues Leu31–Phe51. Over Arg52–His446 the chain is Lumenal. A glycan (N-linked (GlcNAc...) asparagine) is linked at Asn87. The disordered stretch occupies residues Gln425 to His446.

Belongs to the glycosyltransferase 43 family.

It is found in the golgi apparatus membrane. Its function is as follows. Involved in the synthesis of glucuronoxylan hemicellulose in secondary cell walls. The chain is Probable glucuronosyltransferase Os04g0650300 from Oryza sativa subsp. japonica (Rice).